Consider the following 240-residue polypeptide: MKILLIGYGAMNQRVARLAEEKGHEIVGVIENTPKATTPYQQYQHIADVKGADVAIDFSNPNLLFPLLDEDFHLPLVVATTGEKEKLLNKLDELSQNMPVFFSANMSYGVHALTKILAAAVPLLDDFDIELTEAHHNKKVDAPSGTLEKLYDVIVSLKENVTPVYDRHELNEKRQPQDIGIHSIRGGTIVGEHEVLFAGTDETIQITHRAQSKDIFANGAIQAAERLVNKPNGFYTFDNL.

NAD(+)-binding positions include 79-81 (ATT) and 103-106 (SANM). The Proton donor/acceptor role is filled by His-135. His-136 provides a ligand contact to (S)-2,3,4,5-tetrahydrodipicolinate. Lys-139 (proton donor) is an active-site residue. 145–146 (GT) is a (S)-2,3,4,5-tetrahydrodipicolinate binding site.

This sequence belongs to the DapB family.

It localises to the cytoplasm. It catalyses the reaction (S)-2,3,4,5-tetrahydrodipicolinate + NAD(+) + H2O = (2S,4S)-4-hydroxy-2,3,4,5-tetrahydrodipicolinate + NADH + H(+). The catalysed reaction is (S)-2,3,4,5-tetrahydrodipicolinate + NADP(+) + H2O = (2S,4S)-4-hydroxy-2,3,4,5-tetrahydrodipicolinate + NADPH + H(+). Its pathway is amino-acid biosynthesis; L-lysine biosynthesis via DAP pathway; (S)-tetrahydrodipicolinate from L-aspartate: step 4/4. In terms of biological role, catalyzes the conversion of 4-hydroxy-tetrahydrodipicolinate (HTPA) to tetrahydrodipicolinate. The polypeptide is 4-hydroxy-tetrahydrodipicolinate reductase (Staphylococcus aureus (strain USA300)).